We begin with the raw amino-acid sequence, 349 residues long: Heat-inducible transcription repressor HrcA (349 aa).

The protein belongs to the HrcA family.

In terms of biological role, negative regulator of class I heat shock genes (grpE-dnaK-dnaJ and groELS operons). Prevents heat-shock induction of these operons. In Lactobacillus acidophilus (strain ATCC 700396 / NCK56 / N2 / NCFM), this protein is Heat-inducible transcription repressor HrcA.